A 348-amino-acid chain; its full sequence is Anthranilate phosphoribosyltransferase (348 aa).

5-phospho-alpha-D-ribose 1-diphosphate is bound by residues Gly-89, 92–93, Thr-97, 99–102, 117–125, and Ser-129; these read GD, NIST, and KHGNRSASS. Gly-89 serves as a coordination point for anthranilate. Ser-101 is a Mg(2+) binding site. Asn-120 serves as a coordination point for anthranilate. Arg-175 is a binding site for anthranilate. Mg(2+) contacts are provided by Asp-234 and Glu-235.

This sequence belongs to the anthranilate phosphoribosyltransferase family. In terms of assembly, homodimer. Requires Mg(2+) as cofactor.

The catalysed reaction is N-(5-phospho-beta-D-ribosyl)anthranilate + diphosphate = 5-phospho-alpha-D-ribose 1-diphosphate + anthranilate. The protein operates within amino-acid biosynthesis; L-tryptophan biosynthesis; L-tryptophan from chorismate: step 2/5. Functionally, catalyzes the transfer of the phosphoribosyl group of 5-phosphorylribose-1-pyrophosphate (PRPP) to anthranilate to yield N-(5'-phosphoribosyl)-anthranilate (PRA). The protein is Anthranilate phosphoribosyltransferase of Synechocystis sp. (strain ATCC 27184 / PCC 6803 / Kazusa).